Here is a 1457-residue protein sequence, read N- to C-terminus: MDAAGEIQKVASMRLGGSMRGDSGSMWRRGDDVFSRSSREEDDEEALRWAALEKLPTYDRVRRAILPLGGDDGAGDGGGKGVVDVHGLGPRERRALLERLVRVADEDNEKFLLKLKDRVDRVGIDMPTIEVRFEHLEAEAEVRVGNSGLPTVLNSITNTLEEAGNALGILPNRKQTMPVLHDVSGIIKPRRMTLLLGPPGSGKTTLLLALAGRLGKDLKASGKVTYNGHGMEEFVPERTAAYISQHDLHIGEMTVRETLAFSARCQGVGSRFDMLTELSRREKAANIKPDADIDAFMKAAAMGGQEANVNTDYILKILGLEICADTMVGDEMLRGISGGQRKRVTTGEMLVGPARALFMDEISTGLDSSTTFQIVNSLRQTVHILGGTAVISLLQPAPETYNLFDDIILLSDGQIVYQGPREDVLEFFESMGFKCPDRKGVADFLQEVTSKKDQRQYWARHDKPYRFVTVKEFVSAFQSFHTGRAIANELAVPFDKSKSHPAALATTRYGAPGKELLKANIDREILLMKRNSFVYMFRTFQLMVVSLIAMTLFFRTKMKRDSVTSGGIYMGALFFGVLMIMFNGFSELALTVFKLPVFFKQRDLLFYPAWSYTIPSWILKIPITFIEVGGYVFLTYYVIGFDSNVGSFFKQYLLMLAINQMAGSLFRFIGGAARNMIVANVFASFMLLIFMVLGGFILAREQVKKWWIWGYWISPMMYAQNAISVNELMGHSWNKIVNSSASNETLGVQVLKSRGVFPEARWYWIGFGAMIGFTILFNALFTLALTYLRPYGNSRQSVSEEELKEKRANLNGEIVGDVHLSSGSTRRPMGNGTENDSTIVDDDTEVTQRGMVLPFTPLSLSFDNVRYSVDMPQEMKAQGVADDRLELLKGVSGSFRPGVLTALMGVSGAGKTTLMDVLAGRKTGGYIEGSINISGYPKKQETFARVSGYCEQNDIHSPQVTVYESLLFSAWLRLPEDVDSNTRKMFIEEVMELVELKSLRDALVGLPGVNGLSTEQRKRLTIAVELVANPSIIFMDEPTSGLDARAAAIVMRTVRNTVNTGRTVVCTIHQPSIDIFEAFDELFLMKRGGEEIYAGPLGHHSSELIKYFESIPGVSKIKDGYNPATWMLEVTTIGQEQALGVDFSDIYKKSELYQRNKALIKDLSQPAPDSSDLYFPTQYSQSSLTQCMACLWKQNLSYWRNPPYNAVRFFFTTVIALLFGTIFWDLGGKVTKSQDLFNAMGSMYAAVLFIGVMNCTSVQPVVAVERTVFYRERAAGMYSAFPYAFGQVVIEIPYTLVQATVYGIIVYAMIGFEWTAAKFFWYLFFMVFTLLYFTFYGMMAVGLTPNYHIASIVSSAFYAIWNLFSGFVIPRPRVPIWWRWYCWACPVAWTLYGLVVSQFGDIETPMEDGTPVKVFVENYFGFKHSWLGWVATVVAAFAFLFASLFGFAIMKFNFQKR.

The interval Arg-14–Asp-43 is disordered. The segment covering Arg-28 to Arg-39 has biased composition (basic and acidic residues). Residues Gly-164 to Asp-437 enclose the ABC transporter 1 domain. Gly-197–Thr-204 is a binding site for ATP. The ABC transmembrane type-2 1 domain occupies Glu-515 to Leu-728. Helical transmembrane passes span Phe-533 to Phe-553, Ser-565 to Phe-585, Ile-621 to Phe-641, Leu-653 to Ala-673, Ile-677 to Ile-697, Trp-706 to Asn-726, and Ile-765 to Leu-785. The tract at residues Ser-821–Asp-841 is disordered. Residues Leu-860 to Pro-1112 enclose the ABC transporter 2 domain. Gly-905 to Thr-912 lines the ATP pocket. The ABC transmembrane type-2 2 domain maps to Thr-1185–Phe-1399. 7 consecutive transmembrane segments (helical) span residues Phe-1209–Lys-1229, Tyr-1244–Val-1264, Ile-1292–Phe-1312, Phe-1319–Met-1339, Ile-1349–Ile-1369, Trp-1380–Gly-1400, and Trp-1429–Ile-1449.

This sequence belongs to the ABC transporter superfamily. ABCG family. PDR (TC 3.A.1.205) subfamily.

Its subcellular location is the membrane. Its function is as follows. May be a general defense protein. This Oryza sativa subsp. japonica (Rice) protein is ABC transporter G family member 36.